The chain runs to 146 residues: Hemoglobin subunit beta (146 aa).

Position 1 is an N-acetylvaline (Val1). The 145-residue stretch at 2–146 (HLTAAEKSAI…VANALAHKYH (145 aa)) folds into the Globin domain. A heme b-binding site is contributed by His63. Lys82 is modified (N6-acetyllysine). His92 contacts heme b. Cys93 carries the S-nitrosocysteine modification. Lys144 bears the N6-acetyllysine mark.

It belongs to the globin family. In terms of assembly, heterotetramer of two alpha chains and two beta chains. In terms of tissue distribution, red blood cells.

Its function is as follows. Involved in oxygen transport from the lung to the various peripheral tissues. This is Hemoglobin subunit beta (HBB) from Cavia porcellus (Guinea pig).